Consider the following 422-residue polypeptide: Isocitrate dehydrogenase [NADP] (422 aa).

T94 provides a ligand contact to NADP(+). D-threo-isocitrate contacts are provided by S103, N105, R109, R119, and R143. D310 provides a ligand contact to Mg(2+). NADP(+) is bound by residues 344–350, N357, Y396, and R400; that span reads HGTAPKY.

The protein belongs to the isocitrate and isopropylmalate dehydrogenases family. As to quaternary structure, homodimer. The cofactor is Mg(2+). Requires Mn(2+) as cofactor.

It carries out the reaction D-threo-isocitrate + NADP(+) = 2-oxoglutarate + CO2 + NADPH. Its function is as follows. Catalyzes the oxidative decarboxylation of isocitrate to 2-oxoglutarate and carbon dioxide with the concomitant reduction of NADP(+). The polypeptide is Isocitrate dehydrogenase [NADP] (icd) (Staphylococcus aureus (strain COL)).